A 445-amino-acid polypeptide reads, in one-letter code: CBL-interacting serine/threonine-protein kinase 5 (445 aa).

Positions 12–267 (YEMGRLLGKG…IPAIMRTPWL (256 aa)) constitute a Protein kinase domain. ATP-binding positions include 18–26 (LGKGTFAKV) and lysine 41. Residue aspartate 135 is the Proton acceptor of the active site. The tract at residues 153–182 (DFGLSALPEQILQDGLLHTQCGTPAYVAPE) is activation loop. Serine 157 carries the phosphoserine modification. A Phosphothreonine modification is found at threonine 171. Residues 307–332 (ISPKFFNAFEFISSMSSGFDLSSLFE) form the NAF domain. The PPI stretch occupies residues 336-366 (KVQSVFTSRSSATEVMEKIETVTKEMNMKVK).

Belongs to the protein kinase superfamily. CAMK Ser/Thr protein kinase family. SNF1 subfamily. Mn(2+) is required as a cofactor.

It catalyses the reaction L-seryl-[protein] + ATP = O-phospho-L-seryl-[protein] + ADP + H(+). It carries out the reaction L-threonyl-[protein] + ATP = O-phospho-L-threonyl-[protein] + ADP + H(+). Its function is as follows. CIPK serine-threonine protein kinases interact with CBL proteins. Binding of a CBL protein to the regulatory NAF domain of CIPK protein lead to the activation of the kinase in a calcium-dependent manner. The chain is CBL-interacting serine/threonine-protein kinase 5 (CIPK5) from Arabidopsis thaliana (Mouse-ear cress).